The following is a 332-amino-acid chain: Ferrochelatase (332 aa).

Positions 201 and 283 each coordinate Fe cation.

Belongs to the ferrochelatase family.

The protein localises to the cytoplasm. The catalysed reaction is heme b + 2 H(+) = protoporphyrin IX + Fe(2+). The protein operates within porphyrin-containing compound metabolism; protoheme biosynthesis; protoheme from protoporphyrin-IX: step 1/1. In terms of biological role, catalyzes the ferrous insertion into protoporphyrin IX. The chain is Ferrochelatase from Francisella tularensis subsp. holarctica (strain FTNF002-00 / FTA).